We begin with the raw amino-acid sequence, 370 residues long: MVLFFSTRFLFFSIFFPCLISITLYQLDSFEPASLPADSLITSPTSIPPLLNDRFLTGAEFIGVGLLNNPEDIAYHKDSNLIYTGCVDGWVKRVSVHDSANDSIVEDWVNTGGRPLGIAFGLHGEVIVADANKGLLSISDGGKKTELLTDEADGVRFKLTDAVTVADNGVLYFTDASSKYDFYQFIFDFLEGKPHGRVMSFDPTTRATRVLLKDLYFANGISMSPDQTHFVFCETIMRRCSKYYISEERVEVFIQGLPGYPDNIRYDGDGHYWIALISEVTTSWKLSMKYLFLRKLIYMAAKYGVELLSIKNAAVLQVDLDGNPIAMYHDHPFSHITSGVKIGNHLYFGSLLHSYITRLDLLKYPAQKKL.

The signal sequence occupies residues 1–21 (MVLFFSTRFLFFSIFFPCLIS). A glycan (N-linked (GlcNAc...) asparagine) is linked at Asn-101. Position 303 is a phosphotyrosine (Tyr-303).

The protein belongs to the strictosidine synthase family.

The protein resides in the vacuole. In Arabidopsis thaliana (Mouse-ear cress), this protein is Protein STRICTOSIDINE SYNTHASE-LIKE 4.